A 315-amino-acid polypeptide reads, in one-letter code: Ribosomal RNA small subunit methyltransferase H (315 aa).

S-adenosyl-L-methionine is bound by residues 37–39, aspartate 57, phenylalanine 83, aspartate 105, and glutamine 112; that span reads GGH.

The protein belongs to the methyltransferase superfamily. RsmH family.

It localises to the cytoplasm. It catalyses the reaction cytidine(1402) in 16S rRNA + S-adenosyl-L-methionine = N(4)-methylcytidine(1402) in 16S rRNA + S-adenosyl-L-homocysteine + H(+). Functionally, specifically methylates the N4 position of cytidine in position 1402 (C1402) of 16S rRNA. The polypeptide is Ribosomal RNA small subunit methyltransferase H (Pseudomonas fluorescens (strain Pf0-1)).